The chain runs to 311 residues: MKWSELSIHTTHEAVEPISNILHEAGASGVVIEDPLDLIKERENVYGEIYQLDPNDYPDEGVIVKAYLPVNSFLGETVDGIKETINNLLLYNIDLGRNHITISEVNEEEWATAWKKYYHPVKISEKFTIVPTWEEYTPVHTDELIIEMDPGMAFGTGTHPTTVLCIQALERFVQKGDKVIDVGTGSGILSIAAAMLEAESVHAYDLDPVAVESARLNLKLNKVSDIAQVKQNNLLDGIEGEHDVIVANILAEVILRFTSQAYSLLKEGGHFITSGIIGHKKQEVKEALEQAGFTIVEILSMEDWVSIIAKK.

S-adenosyl-L-methionine-binding residues include T162, G183, D205, and N248.

This sequence belongs to the methyltransferase superfamily. PrmA family.

The protein resides in the cytoplasm. The enzyme catalyses L-lysyl-[protein] + 3 S-adenosyl-L-methionine = N(6),N(6),N(6)-trimethyl-L-lysyl-[protein] + 3 S-adenosyl-L-homocysteine + 3 H(+). Its function is as follows. Methylates ribosomal protein L11. This Bacillus subtilis (strain 168) protein is Ribosomal protein L11 methyltransferase.